The primary structure comprises 24 residues: Ascaphin-3 (24 aa).

As to expression, expressed by the skin glands.

The protein resides in the secreted. In terms of biological role, antimicrobial peptide that shows higher potency against Gram-negative bacteria than against Gram-positive bacteria. Has a very week hemolytic activity. The polypeptide is Ascaphin-3 (Ascaphus truei (Coastal tailed frog)).